A 1497-amino-acid polypeptide reads, in one-letter code: MDVTKKNKRDGTEVTERIVTETVTTRLTSLPPKGGTSNGYAKTASLGGGSRLEKQSLTHGSSGYINSTGSTRGHASTSSYRRAHSPASTLPNSPGSTFERKTHVTRHAYEGSSSGNSSPEYPRKEFASSSTRGRSQTRESEIRVRLQSASPSTRWTELDDVKRLLKGSRSASVSPTRNSSNTLPIPKKGTVETKIVTASSQSVSGTYDATILDANLPSHVWSSTLPAGSSMGTYHNNMTTQSSSLLNTNAYSAGSVFGVPNNMASCSPTLHPGLSTSSSVFGMQNNLAPSLTTLSHGTTTTSTAYGVKKNMPQSPAAVNTGVSTSAACTTSVQSDDLLHKDCKFLILEKDNTPAKKEMELLIMTKDSGKVFTASPASIAATSFSEDTLKKEKQAAYNADSGLKAEANGDLKTVSTKGKTTTADIHSYGSSGGGGSGGGGGVGGAGGGPWGPAPAWCPCGSCCSWWKWLLGLLLTWLLLLGLLFGLIALAEEVRKLKARVDELERIRRSILPYGDSMDRIEKDRLQGMAPAAGADLDKIGLHSDSQEELWMFVRKKLMMEQENGNLRGSPGPKGDMGSPGPKGDRGFPGTPGIPGPLGHPGPQGPKGQKGSVGDPGMEGPMGQRGREGPMGPRGEAGPPGSGEKGERGAAGEPGPHGPPGVPGSVGPKGSSGSPGPQGPPGPVGLQGLRGEVGLPGVKGDKGPMGPPGPKGDQGEKGPRGLTGEPGMRGLPGAVGEPGAKGAMGPAGPDGHQGPRGEQGLTGMPGIRGPPGPSGDPGKPGLTGPQGPQGLPGTPGRPGIKGEPGAPGKIVTSEGSSMLTVPGPPGPPGAMGPPGPPGAPGPAGPAGLPGHQEVLNLQGPPGPPGPRGPPGPSIPGPPGPRGPPGEGLPGPPGPPGSFLSNSETFLSGPPGPPGPPGPKGDQGPPGPRGHQGEQGLPGFSTSGSSSFGLNLQGPPGPPGPQGPKGDKGDPGVPGALGIPSGPSEGGSSSTMYVSGPPGPPGPPGPPGSISSSGQEIQQYISEYMQSDSIRSYLSGVQGPPGPPGPPGPVTTITGETFDYSELASHVVSYLRTSGYGVSLFSSSISSEDILAVLQRDDVRQYLRQYLMGPRGPPGPPGASGDGSLLSLDYAELSSRILSYMSSSGISIGLPGPPGPPGLPGTSYEELLSLLRGSEFRGIVGPPGPPGPPGIPGNVWSSISVEDLSSYLHTAGLSFIPGPPGPPGPPGPRGPPGVSGALATYAAENSDSFRSELISYLTSPDVRSFIVGPPGPPGPQGPPGDSRLLSTDASHSRGSSSSSHSSSVRRGSSYSSSMSTGGGGAGSLGAGGAFGEAAGDRGPYGTDIGPGGGYGAAAEGGMYAGNGGLLGADFAGDLDYNELAVRVSESMQRQGLLQGMAYTVQGPPGQPGPQGPPGISKVFSAYSNVTADLMDFFQTYGAIQGPPGQKGEMGTPGPKGDRGPAGPPGHPGPPGPRGHKGEKGDKGDQVYAGRRRRRSIAVKP.

Disordered stretches follow at residues 1–154 (MDVT…PSTR) and 167–186 (GSRS…LPIP). At 1–467 (MDVTKKNKRD…CGSCCSWWKW (467 aa)) the chain is on the cytoplasmic side. A nonhelical region (NC16) region spans residues 1–566 (MDVTKKNKRD…MMEQENGNLR (566 aa)). Residues 9–19 (RDGTEVTERIV) show a composition bias toward basic and acidic residues. 2 stretches are compositionally biased toward polar residues: residues 57-96 (LTHG…SPGS) and 169-183 (RSAS…SNTL). Positions 145–230 (RLQSASPSTR…WSSTLPAGSS (86 aa)) are necessary for interaction with DST and for the recruitment of DST to hemidesmosome. The helical; Signal-anchor for type II membrane protein transmembrane segment at 468–488 (LLGLLLTWLLLLGLLFGLIAL) threads the bilayer. Over 489–1497 (AEEVRKLKAR…RRRRSIAVKP (1009 aa)) the chain is Extracellular. At S544 the chain carries Phosphoserine; by CK2. Disordered regions lie at residues 562–1011 (NGNL…SSSG), 1209–1234 (GLSF…VSGA), and 1261–1316 (SFIV…TGGG). The tract at residues 567–1482 (GSPGPKGDMG…KGEKGDKGDQ (916 aa)) is triple-helical region. Residues 590–602 (PGIPGPLGHPGPQ) show a composition bias toward pro residues. Low complexity-rich tracts occupy residues 604–635 (PKGQ…RGEA), 661–673 (PGSV…SGSP), 735–748 (EPGA…AGPD), and 774–796 (DPGK…PGRP). Composition is skewed to pro residues over residues 820 to 841 (PGPP…PGPA), 858 to 881 (PPGP…PRGP), and 907 to 916 (PPGPPGPPGP). 2 stretches are compositionally biased toward low complexity: residues 936 to 946 (GFSTSGSSSFG) and 968 to 987 (PGVP…GSSS). Pro residues-rich tracts occupy residues 994 to 1004 (PPGPPGPPGPP), 1214 to 1228 (PGPP…PRGP), and 1266 to 1275 (PPGPPGPQGP). The span at 1289-1312 (SRGSSSSSHSSSVRRGSSYSSSMS) shows a compositional bias: low complexity. N1421 carries an N-linked (GlcNAc...) asparagine glycan. A disordered region spans residues 1434 to 1497 (GAIQGPPGQK…RRRRSIAVKP (64 aa)). Pro residues predominate over residues 1458–1469 (AGPPGHPGPPGP). Residues 1472–1481 (HKGEKGDKGD) show a composition bias toward basic and acidic residues. The nonhelical region (NC1) stretch occupies residues 1483 to 1497 (VYAGRRRRRSIAVKP). Residues 1486–1497 (GRRRRRSIAVKP) are compositionally biased toward basic residues.

In terms of assembly, homotrimers of alpha 1(XVII)chains. Interacts (via cytoplasmic region) with ITGB4 (via cytoplasmic region). Interacts (via cytoplasmic region) with DST isoform 3 (via N-terminus). Interacts (via N-terminus) with PLEC. Interacts (via cytoplasmic region) with DSP. In terms of processing, the intracellular/endo domain is disulfide-linked. Prolines at the third position of the tripeptide repeating unit (G-X-Y) are hydroxylated in some or all of the chains. Post-translationally, the ectodomain is shedded from the surface of keratinocytes resulting in a 120-kDa soluble form, also named as 120 kDa linear IgA disease antigen. The shedding is mediated by membrane-bound metalloproteases. This cleavage is inhibited by phosphorylation at Ser-544. Detected in skin. In the cornea, it is detected in the epithelial basement membrane, the epithelial cells, and at a lower level in stromal cells (at protein level). Stratified squamous epithelia. Found in hemidesmosomes. Expressed in cornea, oral mucosa, esophagus, intestine, kidney collecting ducts, ureter, bladder, urethra and thymus but is absent in lung, blood vessels, skeletal muscle and nerves.

It is found in the cell junction. The protein resides in the hemidesmosome. It localises to the membrane. The protein localises to the secreted. Its subcellular location is the extracellular space. It is found in the extracellular matrix. The protein resides in the basement membrane. Functionally, may play a role in the integrity of hemidesmosome and the attachment of basal keratinocytes to the underlying basement membrane. In terms of biological role, the 120 kDa linear IgA disease antigen is an anchoring filament component involved in dermal-epidermal cohesion. Is the target of linear IgA bullous dermatosis autoantibodies. The protein is Collagen alpha-1(XVII) chain (COL17A1) of Homo sapiens (Human).